We begin with the raw amino-acid sequence, 284 residues long: Bifunctional protein FolD (284 aa).

Residues 166–168, serine 191, and isoleucine 232 contribute to the NADP(+) site; that span reads GAS.

It belongs to the tetrahydrofolate dehydrogenase/cyclohydrolase family. Homodimer.

It catalyses the reaction (6R)-5,10-methylene-5,6,7,8-tetrahydrofolate + NADP(+) = (6R)-5,10-methenyltetrahydrofolate + NADPH. The catalysed reaction is (6R)-5,10-methenyltetrahydrofolate + H2O = (6R)-10-formyltetrahydrofolate + H(+). It participates in one-carbon metabolism; tetrahydrofolate interconversion. Catalyzes the oxidation of 5,10-methylenetetrahydrofolate to 5,10-methenyltetrahydrofolate and then the hydrolysis of 5,10-methenyltetrahydrofolate to 10-formyltetrahydrofolate. The sequence is that of Bifunctional protein FolD from Neisseria meningitidis serogroup C (strain 053442).